We begin with the raw amino-acid sequence, 600 residues long: Probable methyltransferase PMT7 (600 aa).

Residues 1-15 (MGGGYVLFGSARSGQ) are Cytoplasmic-facing. A helical; Signal-anchor for type II membrane protein transmembrane segment spans residues 16–36 (MIMVALVLMVGSFYAGSIFGN). The Lumenal portion of the chain corresponds to 37–600 (NSPIYISQPS…FCRKKFWAIL (564 aa)). N-linked (GlcNAc...) asparagine glycans are attached at residues Asn49, Asn98, Asn110, Asn157, Asn200, Asn204, Asn334, Asn447, and Asn484.

Belongs to the methyltransferase superfamily.

The protein localises to the golgi apparatus membrane. In Arabidopsis thaliana (Mouse-ear cress), this protein is Probable methyltransferase PMT7.